Consider the following 409-residue polypeptide: MQYLKPINVFSEIGRLKKVLLHRPGKELENLTPSIMKRLLFDDIPYLHVAIQEHDSFADTLRGNGVKVVYIEDLISETLSNDDSIKEQFISQFILEAGIRTENKTRALKDYFCNMSVNDMISNMIAGVTRDDLKNYKSDSLNSLVNSEYPLIIDPMPNILFTRDPFASIGHGVTINRMSTKTRHRETIFAEYIFKYHPIYKDNVPIWYNRDEDTTLEGGDELVLSRDVLAIGVSERTESESVEKVARKLFEQKISFNTILAFQIPQSRAYMHLDTVFTQIDHTTFTSFISDDMKFTIYALTYDVSSGSIKVKSEKAKLEDILGFYFGCKVNIIKCAGGDLIHGAREQWNDGANTLAISPGEVIVYSRNHMTNKLLEEFGIKVYQIPSSELSRGRGGPRCMSMPLIREDI.

The active-site Amidino-cysteine intermediate is cysteine 399.

The protein belongs to the arginine deiminase family.

The protein resides in the cytoplasm. The catalysed reaction is L-arginine + H2O = L-citrulline + NH4(+). Its pathway is amino-acid degradation; L-arginine degradation via ADI pathway; carbamoyl phosphate from L-arginine: step 1/2. The chain is Arginine deiminase from Borrelia recurrentis (strain A1).